The following is a 242-amino-acid chain: Probable transcriptional regulatory protein Bcen2424_2294 (242 aa).

It belongs to the TACO1 family.

Its subcellular location is the cytoplasm. The sequence is that of Probable transcriptional regulatory protein Bcen2424_2294 from Burkholderia cenocepacia (strain HI2424).